The sequence spans 705 residues: Elongation factor G (705 aa).

The tr-type G domain maps to 8–294 (DRYRNFGIMA…AVIDYLPSPL (287 aa)). Residues 17 to 24 (AHIDAGKT), 92 to 96 (DTPGH), and 146 to 149 (NKMD) each bind GTP.

The protein belongs to the TRAFAC class translation factor GTPase superfamily. Classic translation factor GTPase family. EF-G/EF-2 subfamily.

The protein localises to the cytoplasm. Functionally, catalyzes the GTP-dependent ribosomal translocation step during translation elongation. During this step, the ribosome changes from the pre-translocational (PRE) to the post-translocational (POST) state as the newly formed A-site-bound peptidyl-tRNA and P-site-bound deacylated tRNA move to the P and E sites, respectively. Catalyzes the coordinated movement of the two tRNA molecules, the mRNA and conformational changes in the ribosome. The protein is Elongation factor G of Dinoroseobacter shibae (strain DSM 16493 / NCIMB 14021 / DFL 12).